The primary structure comprises 101 residues: Large ribosomal subunit protein uL23 (101 aa).

The protein belongs to the universal ribosomal protein uL23 family. Part of the 50S ribosomal subunit. Contacts protein L29, and trigger factor when it is bound to the ribosome.

Functionally, one of the early assembly proteins it binds 23S rRNA. One of the proteins that surrounds the polypeptide exit tunnel on the outside of the ribosome. Forms the main docking site for trigger factor binding to the ribosome. The protein is Large ribosomal subunit protein uL23 of Wigglesworthia glossinidia brevipalpis.